Here is a 322-residue protein sequence, read N- to C-terminus: Transcription cofactor vestigial-like protein 2 (322 aa).

The segment covering 42–61 has biased composition (low complexity); sequence ASPGSSASGSSSFSNPTPAS. 2 disordered regions span residues 42–75 and 248–322; these read ASPG…ERPP and PGRL…PTLG. A compositionally biased stretch (basic and acidic residues) spans 62–75; the sequence is VKEEEGSPEKERPP. 2 stretches are compositionally biased toward low complexity: residues 248 to 258 and 270 to 283; these read PGRLAPASAPA and GEPA…PGGP. Over residues 312-322 the composition is skewed to pro residues; it reads SAPPALYPTLG.

This sequence belongs to the vestigial family. In terms of assembly, interacts with TEFs. Binds to TEAD1/TEF1. In terms of tissue distribution, skeletal muscle specific.

The protein resides in the nucleus. Functionally, may act as a specific coactivator for the mammalian TEFs. May play a role in the development of skeletal muscles. The chain is Transcription cofactor vestigial-like protein 2 (Vgll2) from Mus musculus (Mouse).